We begin with the raw amino-acid sequence, 177 residues long: Endothelin-2 (177 aa).

An N-terminal signal peptide occupies residues 1–23; the sequence is MPTALCSIALALLVALHEGKSQA. The propeptide occupies 24–45; that stretch reads ATTPIPEQPAPLPRARGSHLRT. Cystine bridges form between Cys48/Cys62 and Cys50/Cys58. Residues 69 to 177 constitute a propeptide that is removed on maturation; that stretch reads VNTPGQTAPY…RPTHSRQRKR (109 aa). The endothelin-like stretch occupies residues 95-110; the sequence is CECYSARDPACATFCH. The segment at 155–177 is disordered; that stretch reads HFARQQQKPTRETRPTHSRQRKR.

This sequence belongs to the endothelin/sarafotoxin family. In terms of tissue distribution, expressed in various organs including heart, lung, liver, kidney, gastrointestinal tract, uterus and ovary, but not in spleen. Within the gastrointestinal tract, gene expression was detected in rumen, a ruminant-specific digestive organ, as well as stomach, duodenum and colon.

The protein localises to the secreted. Endothelins are endothelium-derived vasoconstrictor peptides. The sequence is that of Endothelin-2 (EDN2) from Bos taurus (Bovine).